The primary structure comprises 84 residues: Small ribosomal subunit protein uS17 (84 aa).

Belongs to the universal ribosomal protein uS17 family. Part of the 30S ribosomal subunit.

In terms of biological role, one of the primary rRNA binding proteins, it binds specifically to the 5'-end of 16S ribosomal RNA. In Moorella thermoacetica (strain ATCC 39073 / JCM 9320), this protein is Small ribosomal subunit protein uS17.